Consider the following 273-residue polypeptide: Undecaprenyl-diphosphatase (273 aa).

Transmembrane regions (helical) follow at residues glycine 18–phenylalanine 40, alanine 45–tryptophan 65, glycine 92–isoleucine 112, alanine 114–alanine 134, leucine 151–phenylalanine 171, tyrosine 189–leucine 209, methionine 225–leucine 245, and phenylalanine 253–glycine 273.

It belongs to the UppP family.

Its subcellular location is the cell inner membrane. It catalyses the reaction di-trans,octa-cis-undecaprenyl diphosphate + H2O = di-trans,octa-cis-undecaprenyl phosphate + phosphate + H(+). Catalyzes the dephosphorylation of undecaprenyl diphosphate (UPP). Confers resistance to bacitracin. This is Undecaprenyl-diphosphatase from Sodalis glossinidius (strain morsitans).